A 483-amino-acid polypeptide reads, in one-letter code: AP-3 complex subunit mu (483 aa).

Residues 211–482 (NNELYVDLLE…KTQTGNFQVR (272 aa)) form the MHD domain.

It belongs to the adaptor complexes medium subunit family. Adaptor protein complex 3 (AP-3) is a heterotetramer composed of 2 large adaptins (APL5 and APL6), a medium adaptin (APM3) and a small adaptin (APS3).

Its subcellular location is the golgi apparatus. The protein resides in the cytoplasmic vesicle membrane. In terms of biological role, part of the AP-3 complex, an adaptor-related complex which is not clathrin-associated. The complex is associated with the Golgi region as well as more peripheral structures. It facilitates the budding of vesicles from the Golgi membrane and may be directly involved in trafficking to the vacuole. Required for the transport via the ALP pathway, which directs the transport of the cargo proteins PHO8 and VAM3 to the vacuole. The polypeptide is AP-3 complex subunit mu (APM3) (Saccharomyces cerevisiae (strain ATCC 204508 / S288c) (Baker's yeast)).